We begin with the raw amino-acid sequence, 254 residues long: E3 ubiquitin-protein ligase NEURL3 (254 aa).

One can recognise an NHR domain in the interval 17 to 174 (ALSFHGNATG…TTKAIELLDP (158 aa)). Residues 197-236 (CVICFHNTANTRLMPCGHSHFCGSCAWHIFKDTARCPICR) form an RING-type zinc finger.

Expressed in alveolar epithelial type II cells.

It is found in the cytoplasm. The catalysed reaction is S-ubiquitinyl-[E2 ubiquitin-conjugating enzyme]-L-cysteine + [acceptor protein]-L-lysine = [E2 ubiquitin-conjugating enzyme]-L-cysteine + N(6)-ubiquitinyl-[acceptor protein]-L-lysine.. It participates in protein modification; protein ubiquitination. In terms of biological role, E3 ubiquitin-protein ligase that plays a role in various biological processes such as lung development or innate immunity. Seems to utilize UBE2E1. Promotes innate antiviral response by catalyzing 'Lys-63'-linked ubiquitination of IRF7. Plays an essential role in TLR4-mediated activation of MAPK pathways by promoting 'Lys-48'-linked polyubiquitination of the phosphatase DUSP1/MKP1. The chain is E3 ubiquitin-protein ligase NEURL3 (Neurl3) from Mus musculus (Mouse).